Consider the following 825-residue polypeptide: Lon protease (825 aa).

One can recognise a Lon N-terminal domain in the interval 41 to 237; it reads LPIIFIPNTI…KVIQLLLEQK (197 aa). 388-395 lines the ATP pocket; it reads GPPGTGKT. A Lon proteolytic domain is found at 625–805; that stretch reads SNPPGVVTGL…DEVLYEALGL (181 aa). Residues S711 and K754 contribute to the active site.

Belongs to the peptidase S16 family. Homohexamer. Organized in a ring with a central cavity.

Its subcellular location is the cytoplasm. It catalyses the reaction Hydrolysis of proteins in presence of ATP.. ATP-dependent serine protease that mediates the selective degradation of mutant and abnormal proteins as well as certain short-lived regulatory proteins. Required for cellular homeostasis and for survival from DNA damage and developmental changes induced by stress. Degrades polypeptides processively to yield small peptide fragments that are 5 to 10 amino acids long. Binds to DNA in a double-stranded, site-specific manner. This chain is Lon protease, found in Methanosphaera stadtmanae (strain ATCC 43021 / DSM 3091 / JCM 11832 / MCB-3).